Reading from the N-terminus, the 644-residue chain is Neurofilament medium polypeptide (644 aa).

Residues 1–33 (VKVELDKKVQSLQDEVAFLRTNHEEEVADLLAQ) are coil 1B. Residues 1–197 (VKVELDKKVQ…KLLEGEETRF (197 aa)) form the IF rod domain. Residue serine 11 is modified to Phosphoserine. Positions 34–50 (IQASHITVERKDYLKTD) are linker 12. The interval 51–72 (ISSALKEIRSQLECHSDQNMHQ) is coil 2A. Residues 73-76 (AEEW) form a linker 2 region. Residues 77–197 (FKCRYAKLTE…KLLEGEETRF (121 aa)) form a coil 2B region. Tyrosine 105 is modified (phosphotyrosine). Phosphoserine occurs at positions 131, 203, and 215. The interval 198-643 (STFSGSITGP…HAIVKEVTQS (446 aa)) is tail. The O-linked (GlcNAc) threonine glycan is linked to threonine 217. Residues serine 253 and serine 269 each carry the phosphoserine modification. The segment at 270-582 (VKEEEKEEEA…GGDRSEEKVV (313 aa)) is disordered. A compositionally biased stretch (acidic residues) spans 274 to 292 (EKEEEAEGKEEEQEAEEEV). Serine 298 carries the phosphoserine modification. The segment covering 308-328 (KEEEGEKEEEGQEEEEEEEDE) has biased composition (acidic residues). Residues 329-350 (GVKSDQAEEGGSEKEGSSKNEG) are compositionally biased toward basic and acidic residues. Residues serine 332, serine 340, serine 345, and serine 346 each carry the phosphoserine modification. Residues 351-368 (EQEEGETEAEGEVEEAEA) are compositionally biased toward acidic residues. At threonine 357 the chain carries Phosphothreonine. Residues 369 to 400 (KEEKKTEEKSEEVAAKEEPVTEAKVGKPEKAK) show a composition bias toward basic and acidic residues. Serine 401, serine 406, serine 442, and serine 465 each carry phosphoserine. The span at 422-470 (GEQKEEEEKVEEEKKKAAKESPKEEKVEKKEEKPKDVPKKKAESPVKEE) shows a compositional bias: basic and acidic residues. Residues 474–483 (EAATITKPTK) show a composition bias toward low complexity. Residues 485–508 (GLEKETKEGEKPLQQEKEKEKAGE) are compositionally biased toward basic and acidic residues. 3 positions are modified to phosphoserine: serine 512, serine 550, and serine 566. Basic and acidic residues predominate over residues 545-557 (TKEKGSGREEEKG). Over residues 568 to 582 (ADEKKGGDRSEEKVV) the composition is skewed to basic and acidic residues.

The protein belongs to the intermediate filament family. As to quaternary structure, forms heterodimers with NEFL; which can further hetero-oligomerize (in vitro). Forms heterodimers with INA (in vitro). In terms of processing, there are a number of repeats of the tripeptide K-S-P, NFM is phosphorylated on a number of the serines in this motif. It is thought that phosphorylation of NFM results in the formation of interfilament cross bridges that are important in the maintenance of axonal caliber. Phosphorylation seems to play a major role in the functioning of the larger neurofilament polypeptides (NF-M and NF-H), the levels of phosphorylation being altered developmentally and coincidentally with a change in the neurofilament function. Post-translationally, phosphorylated in the head and rod regions by the PKC kinase PKN1, leading to the inhibition of polymerization.

The protein localises to the cytoplasm. The protein resides in the cytoskeleton. Its subcellular location is the cell projection. It is found in the axon. In terms of biological role, neurofilaments usually contain three intermediate filament proteins: NEFL, NEFM, and NEFH which are involved in the maintenance of neuronal caliber. May additionally cooperate with the neuronal intermediate filament proteins PRPH and INA to form neuronal filamentous networks. The polypeptide is Neurofilament medium polypeptide (NEFM) (Oryctolagus cuniculus (Rabbit)).